Reading from the N-terminus, the 255-residue chain is Cysteine protease avirulence protein AvrRpt2 (255 aa).

Positions Met-1–Thr-50 are disordered. Positions Met-1 to Gly-71 are cleaved as a propeptide — removed in mature form. The tract at residues Phe-70–Gly-71 is determinants of cleavage specificity. The tract at residues Lys-76–Thr-100 is disordered. The segment covering Ser-86–Asp-98 has biased composition (low complexity). Cys-122 serves as the catalytic Nucleophile. Catalysis depends on residues His-208 and Asp-226.

It belongs to the peptidase C70 family. Interacts physically with plant cell ROC1 (Arabidopsis single-domain cyclophilin) and RIN4. In terms of processing, autocleaved inside plant cells upon activation by cyclophilin. Cleavage is crucial in subcellular location and in eliciting HR. Inhibited by cyclosporin A (cyclophilin inhibitor).

Its subcellular location is the secreted. It is found in the host cell membrane. Its function is as follows. Effector protein involved in gene-for-gene resistance in plants expressing RPS2. Its thiol protease activity is required for the degradation of plant cell RIN4 and consequent activation of RPS2 during bacterial infection. The activation of RPS2 is sufficient for the induction of hypersensitive response (HR) and plant resistance. Cleavage of RIN4 by AvrRpt2 also interferes with RPM1-mediated resistance activated by either AvrRpm1 or AvrB. Contributes to virulence in plants lacking the resistance protein RPS2 promoting pathogen growth and disease symptoms. Inhibits PAMP (pathogen-associated molecular patterns)-induced signaling compromising the host's basal defense system. Blocks plant callose deposition, flg22 (a peptide corresponding to the most conserved domain of flagellin) induced accumulation of PR-1, PR-2 and PR-5 and activation of GST6 transcription. The mechanism of virulence is unknown, but this activity is independent of ethylene and salicylic acid response pathways and independent of RIN4 disappearance. In Pseudomonas syringae pv. tomato, this protein is Cysteine protease avirulence protein AvrRpt2 (avrRpt2).